The primary structure comprises 416 residues: Squalene synthase (416 aa).

Helical transmembrane passes span 285-304 (VINF…NACY) and 386-406 (FISY…FLIA).

Belongs to the phytoene/squalene synthase family. It depends on Mg(2+) as a cofactor.

It is found in the endoplasmic reticulum membrane. The enzyme catalyses 2 (2E,6E)-farnesyl diphosphate + NADPH + H(+) = squalene + 2 diphosphate + NADP(+). It catalyses the reaction 2 (2E,6E)-farnesyl diphosphate + NADH + H(+) = squalene + 2 diphosphate + NAD(+). It functions in the pathway terpene metabolism; lanosterol biosynthesis; lanosterol from farnesyl diphosphate: step 1/3. The sequence is that of Squalene synthase (fdfT) from Dictyostelium discoideum (Social amoeba).